A 152-amino-acid chain; its full sequence is Orientotoxin-1 (152 aa).

As to expression, expressed by the venom gland.

It is found in the secreted. The catalysed reaction is a 1-acyl-sn-glycero-3-phosphocholine + H2O = sn-glycerol 3-phosphocholine + a fatty acid + H(+). Neurotoxin of presynaptic effect which degrades lysophospholipids. This chain is Orientotoxin-1, found in Vespa orientalis (Oriental hornet).